Consider the following 171-residue polypeptide: S-ribosylhomocysteine lyase (171 aa).

The Fe cation site is built by H54, H58, and C128.

This sequence belongs to the LuxS family. Homodimer. Fe cation serves as cofactor.

It carries out the reaction S-(5-deoxy-D-ribos-5-yl)-L-homocysteine = (S)-4,5-dihydroxypentane-2,3-dione + L-homocysteine. Its function is as follows. Involved in the synthesis of autoinducer 2 (AI-2) which is secreted by bacteria and is used to communicate both the cell density and the metabolic potential of the environment. The regulation of gene expression in response to changes in cell density is called quorum sensing. Catalyzes the transformation of S-ribosylhomocysteine (RHC) to homocysteine (HC) and 4,5-dihydroxy-2,3-pentadione (DPD). The sequence is that of S-ribosylhomocysteine lyase from Proteus mirabilis (strain HI4320).